Here is a 350-residue protein sequence, read N- to C-terminus: C5a anaphylatoxin chemotactic receptor 1 (350 aa).

Residues 1–37 (MDSFNYTTPDYGHYDDKDTLDPNTPVDKTSNTLRVPD) lie on the Extracellular side of the membrane. A required for CHIPS binding region spans residues 10–18 (DYGHYDDKD). 2 positions are modified to sulfotyrosine: Y11 and Y14. Positions 21-30 (DPNTPVDKTS) are involved in C5a binding. The chain crosses the membrane as a helical span at residues 38–64 (ILALVIFAVVFLVGVLGNALVVWVTAF). Residues 65–69 (EVKRT) lie on the Cytoplasmic side of the membrane. The chain crosses the membrane as a helical span at residues 70–93 (INAIWFLNLAVADFLSCLALPILF). Over 94–110 (TSIVQHHHWPFGGAACR) the chain is Extracellular. Residues C109 and C188 are joined by a disulfide bond. The helical transmembrane segment at 111 to 132 (ILPSLILLNMYASILLLATISA) threads the bilayer. Over 133 to 153 (DRFLLVFKPIWCQNFRGAGLA) the chain is Cytoplasmic. A helical transmembrane segment spans residues 154-174 (WIACAVAWGLALLLTIPSFLY). At 175–200 (RVVREEYFPPKVLCGVDYSHDKQRER) the chain is on the extracellular side. A helical membrane pass occupies residues 201-226 (AVAVVRLVLGFLWPLLTLTICYTFIL). Topologically, residues 227 to 242 (LRTWSRRATRSTKTLK) are cytoplasmic. A helical transmembrane segment spans residues 243–265 (VVVAVVASFFIFWLPYQVTGIMM). Over 266 to 282 (SFLEPSSPTFLLLKKLD) the chain is Extracellular. Residues 283–303 (SLCVSFAYINCCINPIIYVVA) traverse the membrane as a helical segment. Over 304 to 350 (GQGFQGRLRKSLPSLLRNVLTEESVVRESKSFTRSTVDTMAEKTQAV) the chain is Cytoplasmic. Residues S314, S317, S327, S332, S334, and S338 each carry the phosphoserine modification.

The protein belongs to the G-protein coupled receptor 1 family. In terms of assembly, homodimer. May also form higher-order oligomers. Interacts (when phosphorylated) with ARRB1 and ARRB2; the interaction is associated with internalization of C5aR. Interacts (via N-terminal domain) with S.aureus chemotaxis inhibitory protein (CHIPS); the interaction blocks the receptor and may thus inhibit the immune response. Sulfation plays a critical role in the association of C5aR with C5a, but no significant role in the ability of the receptor to transduce a signal and mobilize calcium in response to a small peptide agonist. Sulfation at Tyr-14 is important for CHIPS binding. Post-translationally, phosphorylated on serine residues in response to C5a binding, resulting in internalization of the receptor and short-term desensitization to C5a.

It localises to the cell membrane. The protein resides in the cytoplasmic vesicle. Functionally, receptor for the chemotactic and inflammatory peptide anaphylatoxin C5a. The ligand interacts with at least two sites on the receptor: a high-affinity site on the extracellular N-terminus, and a second site in the transmembrane region which activates downstream signaling events. Receptor activation stimulates chemotaxis, granule enzyme release, intracellular calcium release and superoxide anion production. This Gorilla gorilla gorilla (Western lowland gorilla) protein is C5a anaphylatoxin chemotactic receptor 1 (C5AR1).